The primary structure comprises 227 residues: Cytidylate kinase (227 aa).

Residue 11–19 coordinates ATP; the sequence is GPSGAGKGT.

The protein belongs to the cytidylate kinase family. Type 1 subfamily.

The protein resides in the cytoplasm. The enzyme catalyses CMP + ATP = CDP + ADP. The catalysed reaction is dCMP + ATP = dCDP + ADP. The protein is Cytidylate kinase of Pasteurella multocida (strain Pm70).